Reading from the N-terminus, the 369-residue chain is Chanoclavine-I aldehyde reductase fgaOx3 (369 aa).

Residues 23–25 (PMT), Ala-58, Gln-100, and His-169 each bind FMN. Substrate-binding residues include His-169 and Asn-172. The Proton donor role is filled by Tyr-174. FMN contacts are provided by residues Gly-292, 316 to 317 (GR), and Arg-317. Residue Tyr-344 coordinates substrate.

This sequence belongs to the NADH:flavin oxidoreductase/NADH oxidase family. As to quaternary structure, monomer. FMN serves as cofactor.

It carries out the reaction dihydrochanoclavine-I aldehyde + NADP(+) = chanoclavine-I aldehyde + NADPH + H(+). It functions in the pathway alkaloid biosynthesis; ergot alkaloid biosynthesis. Functionally, chanoclavine-I aldehyde reductase; part of the gene cluster that mediates the biosynthesis of isofumigaclavines, fungal ergot alkaloids. The tryptophan dimethylallyltransferase ifgA catalyzes the first step of ergot alkaloid biosynthesis by condensing dimethylallyl diphosphate (DMAP) and tryptophan to form 4-dimethylallyl-L-tryptophan. The second step is catalyzed by the methyltransferase ifgB that methylates 4-dimethylallyl-L-tryptophan in the presence of S-adenosyl-L-methionine, resulting in the formation of N-methyl-dimethylallyl-L-tryptophan. The catalase ifgD and the FAD-dependent oxidoreductase ifgC then transform N-methyl-dimethylallyl-L-tryptophan to chanoclavine-I which is further oxidized by ifgE in the presence of NAD(+), resulting in the formation of chanoclavine-I aldehyde. The chanoclavine-I aldehyde reductases ifgG and/or fgaOx3 reduce chanoclavine-I aldehyde to dihydrochanoclavine-I aldehyde that spontaneously dehydrates to form 6,8-dimethyl-6,7-didehydroergoline. The festuclavine dehydrogenases ifgF1 and/or ifgF2 then catalyze the reduction of 6,8-dimethyl-6,7-didehydroergoline to form festuclavine. Hydrolysis of festuclavine by a yet undetermined cytochrome P450 monooxygenase (called ifgH) then leads to the formation of isofumigaclavine B which is in turn acetylated by ifgI to isofumigaclavine A. Penicillium roqueforti has interestingly at least two sets of genes for the consumption of chanoclavine-I aldehyde on three different loci, the OYEs ifgG/fgaOx3 and the festuclavine synthase homologs ifgF1/ifgF2. The reason for the duplication of these genes is unclear, probably to ensure the conversion of chanoclavine-I aldehyde by differential gene expression under various environmental conditions. The polypeptide is Chanoclavine-I aldehyde reductase fgaOx3 (Penicillium roqueforti (strain FM164)).